The primary structure comprises 604 residues: Linalool synthase Tps-5073L4, chloroplastic (604 aa).

Residues Met1–Ser36 constitute a chloroplast transit peptide. Residues Arg323, Asp360, Asp364, Arg501, and Asp504 each contribute to the (2E)-geranyl diphosphate site. Residues Asp360 and Asp364 each contribute to the Mg(2+) site. The DDXXD motif motif lies at Asp360 to Asp364. Residues Asp504, Thr508, and Glu512 each contribute to the Mg(2+) site.

Belongs to the terpene synthase family. Tpsb subfamily. In terms of assembly, monomer. Requires Mg(2+) as cofactor. The cofactor is Mn(2+).

It localises to the plastid. Its subcellular location is the chloroplast. It catalyses the reaction (2E)-geranyl diphosphate + H2O = linalool + diphosphate. It participates in secondary metabolite biosynthesis; terpenoid biosynthesis. Its function is as follows. Monoterpene synthase (mono-TPS) involved in the biosynthesis of monoterpenes natural products. Catalyzes the conversion of (2E)-geranyl diphosphate (GPP) into linalool. In Perilla frutescens (Beefsteak mint), this protein is Linalool synthase Tps-5073L4, chloroplastic.